The following is a 637-amino-acid chain: Biosynthetic arginine decarboxylase (637 aa).

An N6-(pyridoxal phosphate)lysine modification is found at lysine 101. Substrate is bound at residue 286-296 (FDVGGGLAVDY).

The protein belongs to the Orn/Lys/Arg decarboxylase class-II family. SpeA subfamily. Mg(2+) serves as cofactor. Requires pyridoxal 5'-phosphate as cofactor.

The enzyme catalyses L-arginine + H(+) = agmatine + CO2. Its pathway is amine and polyamine biosynthesis; agmatine biosynthesis; agmatine from L-arginine: step 1/1. Functionally, catalyzes the biosynthesis of agmatine from arginine. The chain is Biosynthetic arginine decarboxylase from Shewanella sp. (strain ANA-3).